The chain runs to 140 residues: Natriuretic peptides B (140 aa).

Positions 1-26 (MEPCAALPRALLLLLFLHLSPLGGRP) are cleaved as a signal peptide. Positions 71–94 (LEPLHRSHSPAEAPEAGGTPRGVL) are disordered. A disulfide bridge connects residues C118 and C134.

It belongs to the natriuretic peptide family. Post-translationally, the precursor molecule is proteolytically cleaved by the endoproteases FURIN or CORIN at Arg-108 to produce the brain natriuretic peptide 32. CORIN also cleaves the precursor molecule at additional residues including Arg-105, Arg-108 and possibly Lys-111. Undergoes further proteolytic cleavage by various proteases such as DPP4, MME and possibly FAP, to give rise to a variety of shorter peptides. Cleaved at Pro-110 by the prolyl endopeptidase FAP (seprase) activity (in vitro). Degraded by IDE. During IDE degradation, the resulting products initially increase the activation of NPR1 and can also stimulate NPR2 to produce cGMP before the fragments are completely degraded and inactivated by IDE (in vitro). In terms of tissue distribution, brain and also in atria, but at much lower levels than ANP.

It localises to the secreted. Functionally, cardiac hormone that plays a key role in mediating cardio-renal homeostasis. May also function as a paracrine antifibrotic factor in the heart. Acts by specifically binding and stimulating NPR1 to produce cGMP, which in turn activates effector proteins that drive various biological responses. Involved in regulating the extracellular fluid volume and maintaining the fluid-electrolyte balance through natriuresis, diuresis, vasorelaxation, and inhibition of renin and aldosterone secretion. Binds the clearance receptor NPR3. In terms of biological role, may affect cardio-renal homeostasis. Able to promote the production of cGMP although its potency is very low compared to brain natriuretic peptide 32. The polypeptide is Natriuretic peptides B (NPPB) (Canis lupus familiaris (Dog)).